The chain runs to 376 residues: MPLPVQGNYTNFARLTNEQKTVWSLQFWRQARNAAFINMFLGTDANSMIQQITELRRDEKGARAVITLIADMVGDGVVGDNQLEGNEEALTAFDTVIQLDQMRAANVHEGRMADQRSIVNFRTTSRDMLAYWLADRMDQLAFLSLAGVSYAYRTNGALRGSSPFPNLTFAADVTPPSANRRLRWDGTNKVLVPNAATSDVTAADTPSYALLVNLKAYAKTKYIRGLRGDGGEEMYHVFLDPLAMAKLKLDPDYIANLRSGYTRGNVNPLFKGGIVTVDGLVIHEFRHVYNTRGMAPGAKWGASGNVDGCSMLFCGAQALGFADIGNPRWVEKEFDYDNKHGISVAKILGFLKPQFPSIYEDGNTEDFGVINVYVAA.

The protein resides in the virion. Its function is as follows. Assembles to form an icosahedral capsid. The sequence is that of Major capsid protein from Pseudomonas aeruginosa (Bacteriophage KPP25).